Here is a 148-residue protein sequence, read N- to C-terminus: Antitoxin Xre (148 aa).

The protein belongs to the MbcA/ParS/Xre antitoxin family. As to quaternary structure, homodimer. Forms a complex with cognate toxin Rse.

In terms of biological role, antitoxin component of a type II toxin-antitoxin (TA) system. Neutralizes the activity of cognate toxin Res. In Yersinia enterocolitica serotype O:8 / biotype 1B (strain NCTC 13174 / 8081), this protein is Antitoxin Xre.